The primary structure comprises 397 residues: Tryptophan synthase beta chain (397 aa).

At Lys91 the chain carries N6-(pyridoxal phosphate)lysine.

This sequence belongs to the TrpB family. As to quaternary structure, tetramer of two alpha and two beta chains. Pyridoxal 5'-phosphate serves as cofactor.

The catalysed reaction is (1S,2R)-1-C-(indol-3-yl)glycerol 3-phosphate + L-serine = D-glyceraldehyde 3-phosphate + L-tryptophan + H2O. It participates in amino-acid biosynthesis; L-tryptophan biosynthesis; L-tryptophan from chorismate: step 5/5. Functionally, the beta subunit is responsible for the synthesis of L-tryptophan from indole and L-serine. The protein is Tryptophan synthase beta chain of Bacillus cereus (strain AH187).